A 421-amino-acid chain; its full sequence is UDP-N-acetylglucosamine 1-carboxyvinyltransferase (421 aa).

Position 22-23 (22-23) interacts with phosphoenolpyruvate; that stretch reads KN. Position 91 (R91) interacts with UDP-N-acetyl-alpha-D-glucosamine. C115 (proton donor) is an active-site residue. C115 carries the 2-(S-cysteinyl)pyruvic acid O-phosphothioketal modification. UDP-N-acetyl-alpha-D-glucosamine-binding positions include 120–124, D306, and I328; that span reads RPIDL.

The protein belongs to the EPSP synthase family. MurA subfamily.

It localises to the cytoplasm. The catalysed reaction is phosphoenolpyruvate + UDP-N-acetyl-alpha-D-glucosamine = UDP-N-acetyl-3-O-(1-carboxyvinyl)-alpha-D-glucosamine + phosphate. It participates in cell wall biogenesis; peptidoglycan biosynthesis. Cell wall formation. Adds enolpyruvyl to UDP-N-acetylglucosamine. This is UDP-N-acetylglucosamine 1-carboxyvinyltransferase from Methylacidiphilum infernorum (isolate V4) (Methylokorus infernorum (strain V4)).